Reading from the N-terminus, the 172-residue chain is Cytochrome c oxidase subunit 4 isoform 2, mitochondrial (172 aa).

A mitochondrion-targeting transit peptide spans 1–34 (MFSRAARSLVMRTGLRTRGTGTHSPGDAAGSQRR). The segment covering 13-22 (TGLRTRGTGT) has biased composition (low complexity). A disordered region spans residues 13 to 32 (TGLRTRGTGTHSPGDAAGSQ). Residues 35 to 101 (MTPYVDCYAQ…TFAEMNHRSN (67 aa)) lie on the Mitochondrial matrix side of the membrane. A helical transmembrane segment spans residues 102–127 (EWKTVMGCVFFFIGFTALVIWWQRVY). The Mitochondrial intermembrane segment spans residues 128–172 (VFPKKVVTLTEERKAQQLQRLLDMKSNPIQGLAAHWDYEKKEWKK).

Belongs to the cytochrome c oxidase IV family. Component of the cytochrome c oxidase (complex IV, CIV), a multisubunit enzyme composed of 14 subunits. The complex is composed of a catalytic core of 3 subunits MT-CO1, MT-CO2 and MT-CO3, encoded in the mitochondrial DNA, and 11 supernumerary subunits COX4I, COX5A, COX5B, COX6A, COX6B, COX6C, COX7A, COX7B, COX7C, COX8 and NDUFA4, which are encoded in the nuclear genome. The complex exists as a monomer or a dimer and forms supercomplexes (SCs) in the inner mitochondrial membrane with NADH-ubiquinone oxidoreductase (complex I, CI) and ubiquinol-cytochrome c oxidoreductase (cytochrome b-c1 complex, complex III, CIII), resulting in different assemblies (supercomplex SCI(1)III(2)IV(1) and megacomplex MCI(2)III(2)IV(2)).

The protein resides in the mitochondrion inner membrane. Its pathway is energy metabolism; oxidative phosphorylation. Component of the cytochrome c oxidase, the last enzyme in the mitochondrial electron transport chain which drives oxidative phosphorylation. The respiratory chain contains 3 multisubunit complexes succinate dehydrogenase (complex II, CII), ubiquinol-cytochrome c oxidoreductase (cytochrome b-c1 complex, complex III, CIII) and cytochrome c oxidase (complex IV, CIV), that cooperate to transfer electrons derived from NADH and succinate to molecular oxygen, creating an electrochemical gradient over the inner membrane that drives transmembrane transport and the ATP synthase. Cytochrome c oxidase is the component of the respiratory chain that catalyzes the reduction of oxygen to water. Electrons originating from reduced cytochrome c in the intermembrane space (IMS) are transferred via the dinuclear copper A center (CU(A)) of subunit 2 and heme A of subunit 1 to the active site in subunit 1, a binuclear center (BNC) formed by heme A3 and copper B (CU(B)). The BNC reduces molecular oxygen to 2 water molecules using 4 electrons from cytochrome c in the IMS and 4 protons from the mitochondrial matrix. This chain is Cytochrome c oxidase subunit 4 isoform 2, mitochondrial (Cox4i2), found in Mus musculus (Mouse).